A 275-amino-acid polypeptide reads, in one-letter code: MKLAVYGKGGIGKSTTSCNISVALAKRGRRVLQIGCDPKHDSTFTLTGFLIPTIIDTLEEKDYHYEDVYAEDVIYEGYGGVHCVEAGGPPAGAGCGGYVVGETMKLLKELRAFEDHDVILFDVLGDVVCGGFAAPLNYADYCVIITDNGFDALFAANRIAASCREKARTHPLKLAGLVGNRTNKRDLIDKYVEAVPMPVLEILPLIEDIRVSRVKGKTIFEMAETDPSLEPVCQYYLNIADHLLACPEGVVPQECPDRALFELLSDFYSRTPVPA.

ATP contacts are provided by residues 10–15 (GIGKST) and Lys39. Ser14 is a Mg(2+) binding site. [4Fe-4S] cluster contacts are provided by Cys95 and Cys129. 180–181 (NR) serves as a coordination point for ATP.

It belongs to the NifH/BchL/ChlL family. In terms of assembly, homodimer. Protochlorophyllide reductase is composed of three subunits; ChlL, ChlN and ChlB. It depends on [4Fe-4S] cluster as a cofactor.

The catalysed reaction is chlorophyllide a + oxidized 2[4Fe-4S]-[ferredoxin] + 2 ADP + 2 phosphate = protochlorophyllide a + reduced 2[4Fe-4S]-[ferredoxin] + 2 ATP + 2 H2O. Its pathway is porphyrin-containing compound metabolism; chlorophyll biosynthesis (light-independent). Its function is as follows. Component of the dark-operative protochlorophyllide reductase (DPOR) that uses Mg-ATP and reduced ferredoxin to reduce ring D of protochlorophyllide (Pchlide) to form chlorophyllide a (Chlide). This reaction is light-independent. The L component serves as a unique electron donor to the NB-component of the complex, and binds Mg-ATP. In Gloeobacter violaceus (strain ATCC 29082 / PCC 7421), this protein is Light-independent protochlorophyllide reductase iron-sulfur ATP-binding protein.